Consider the following 373-residue polypeptide: Chaperone protein DnaJ (373 aa).

In terms of domain architecture, J spans 4-68 (DFYEILGVSR…QARANYDRFG (65 aa)). The segment at 132–214 (GGEKEIRINH…CGGQGHIQVS (83 aa)) adopts a CR-type zinc-finger fold. Positions 145, 148, 162, 165, 188, 191, 202, and 205 each coordinate Zn(2+). CXXCXGXG motif repeat units lie at residues 145-152 (CKTCQGTG), 162-169 (CSTCGGVG), 188-195 (CPTCGGSG), and 202-209 (CESCGGQG).

It belongs to the DnaJ family. Homodimer. The cofactor is Zn(2+).

Its subcellular location is the cytoplasm. In terms of biological role, participates actively in the response to hyperosmotic and heat shock by preventing the aggregation of stress-denatured proteins and by disaggregating proteins, also in an autonomous, DnaK-independent fashion. Unfolded proteins bind initially to DnaJ; upon interaction with the DnaJ-bound protein, DnaK hydrolyzes its bound ATP, resulting in the formation of a stable complex. GrpE releases ADP from DnaK; ATP binding to DnaK triggers the release of the substrate protein, thus completing the reaction cycle. Several rounds of ATP-dependent interactions between DnaJ, DnaK and GrpE are required for fully efficient folding. Also involved, together with DnaK and GrpE, in the DNA replication of plasmids through activation of initiation proteins. The protein is Chaperone protein DnaJ of Thermosynechococcus vestitus (strain NIES-2133 / IAM M-273 / BP-1).